Here is an 805-residue protein sequence, read N- to C-terminus: Phenylalanine--tRNA ligase beta subunit (805 aa).

In terms of domain architecture, tRNA-binding spans 39–155 (VKVLGAFRIC…EDAPMGMRFI (117 aa)). Residues 408-479 (DTSRAYRFDP…RVASLTKLQG (72 aa)) enclose the B5 domain. Mg(2+) contacts are provided by Asp-457, Asp-463, Glu-466, and Glu-467. One can recognise an FDX-ACB domain in the interval 707–804 (SDLQAVERDF…VAKATGATLR (98 aa)).

It belongs to the phenylalanyl-tRNA synthetase beta subunit family. Type 1 subfamily. Tetramer of two alpha and two beta subunits. The cofactor is Mg(2+).

Its subcellular location is the cytoplasm. It carries out the reaction tRNA(Phe) + L-phenylalanine + ATP = L-phenylalanyl-tRNA(Phe) + AMP + diphosphate + H(+). The polypeptide is Phenylalanine--tRNA ligase beta subunit (Cereibacter sphaeroides (strain ATCC 17023 / DSM 158 / JCM 6121 / CCUG 31486 / LMG 2827 / NBRC 12203 / NCIMB 8253 / ATH 2.4.1.) (Rhodobacter sphaeroides)).